The sequence spans 149 residues: Calmodulin-2 (149 aa).

Ala-2 carries the N-acetylalanine modification. EF-hand domains follow at residues 8–43 (EQIA…LGQN), 44–79 (PTEA…KMKD), 81–116 (DSEE…LGEK), and 117–149 (LTDE…MMAK). 14 residues coordinate Ca(2+): Asp-21, Asp-23, Asp-25, Cys-27, Glu-32, Asp-57, Asp-59, Asn-61, Thr-63, Glu-68, Asp-94, Asp-96, Asn-98, and Glu-105. N6,N6,N6-trimethyllysine is present on Lys-116. Residues Asp-130, Asp-132, Asp-134, Gln-136, and Glu-141 each coordinate Ca(2+).

It belongs to the calmodulin family.

Functionally, calmodulin mediates the control of a large number of enzymes, ion channels and other proteins by Ca(2+). Among the enzymes to be stimulated by the calmodulin-Ca(2+) complex are a number of protein kinases and phosphatases. The chain is Calmodulin-2 (CAM2) from Oryza sativa subsp. indica (Rice).